The chain runs to 179 residues: Large ribosomal subunit protein uL6 (179 aa).

It belongs to the universal ribosomal protein uL6 family. In terms of assembly, part of the 50S ribosomal subunit.

This protein binds to the 23S rRNA, and is important in its secondary structure. It is located near the subunit interface in the base of the L7/L12 stalk, and near the tRNA binding site of the peptidyltransferase center. This chain is Large ribosomal subunit protein uL6, found in Nocardioides sp. (strain ATCC BAA-499 / JS614).